A 462-amino-acid polypeptide reads, in one-letter code: Retinoic acid receptor alpha (462 aa).

Residues M1–P87 are modulating. Over residues G52–Q64 the composition is skewed to polar residues. The interval G52–S77 is disordered. A Phosphoserine; by CDK7 modification is found at S77. 2 NR C4-type zinc fingers span residues C88–C108 and C124–C148. The nuclear receptor DNA-binding region spans C88–M153. S96 is subject to Phosphoserine; by PKB/AKT1. A hinge region spans residues S154–P182. Glycyl lysine isopeptide (Lys-Gly) (interchain with G-Cter in SUMO) cross-links involve residues K166 and K171. The NR LBD domain occupies E183–S417. At S219 the chain carries Phosphoserine; by PKA. C235 provides a ligand contact to all-trans-retinoate. A UBR5-degron motif is present at residues I254–I258. All-trans-retinoate is bound at residue S287. S369 carries the post-translational modification Phosphoserine; by PKA. K399 participates in a covalent cross-link: Glycyl lysine isopeptide (Lys-Gly) (interchain with G-Cter in SUMO). Residues G404–G419 form a required for binding corepressor NCOR1 region. Positions P408–N416 match the 9aaTAD motif. A disordered region spans residues G419–P462. Over residues Q426–L437 the composition is skewed to gly residues. Over residues C444–P462 the composition is skewed to low complexity.

It belongs to the nuclear hormone receptor family. NR1 subfamily. Heterodimer; with RXRA (via C-terminus); association with RXRA is enhanced by pulsatile shear stress. Binds DNA preferentially as a heterodimer. RXRA serves as enhancer to induce RARA binding to RARE. Interacts with RXRG. Interacts with coactivators NCOA3 and NCOA6. Interacts with NCOA7; the interaction requires ligand-binding. Interacts (via the ligand-binding domain) with PRAME; the interaction is ligand (retinoic acid)-dependent. Interacts with AKT1; the interaction phosphorylates RARA and represses transactivation. Interacts with PRKAR1A; the interaction negatively regulates RARA transcriptional activity. Interacts with NCOR1 and NCOR2. Interacts with PRMT2. Interacts with LRIF1. Interacts with ASXL1 and NCOA1. Interacts with ACTN4. In a complex with HDAC3, HDAC5 and HDAC7; the HDACs serve as corepressors of RARA, causing its deacetylation and inhibition of RARE DNA element binding; association with HDAC3, HDAC5 and HDAC7 is increased upon oscillatory shear stress. Interacts with CDK7. In the absence of hormonal ligand, interacts with TACC1. Post-translationally, phosphorylated on serine and threonine residues. Phosphorylation does not change during cell cycle. Phosphorylation on Ser-77 is crucial for transcriptional activity. Phosphorylation by AKT1 is required for the repressor activity but has no effect on DNA binding, protein stability nor subcellular localization. Phosphorylated by PKA in vitro. This phosphorylation on Ser-219 and Ser-369 is critical for ligand binding, nuclear localization and transcriptional activity in response to FSH signaling. In terms of processing, sumoylated with SUMO2, mainly on Lys-399 which is also required for SENP6 binding. On all-trans retinoic acid (ATRA) binding, a conformational change may occur that allows sumoylation on two additional site, Lys-166 and Lys-171. Probably desumoylated by SENP6. Sumoylation levels determine nuclear localization and regulate ATRA-mediated transcriptional activity. Trimethylation enhances heterodimerization with RXRA and positively modulates the transcriptional activation. Post-translationally, ubiquitinated by UBR5, leading to its degradation: UBR5 specifically recognizes and binds ligand-bound RARA when it is not associated with coactivators (NCOAs). In presence of NCOAs, the UBR5-degron is not accessible, preventing its ubiquitination and degradation. In terms of processing, acetylated; acetylation is increased upon pulsatile shear stress and decreased upon oscillatory shear stress. Expressed in monocytes.

It localises to the nucleus. Its subcellular location is the cytoplasm. In terms of biological role, receptor for retinoic acid. Retinoic acid receptors bind as heterodimers to their target response elements in response to their ligands, all-trans or 9-cis retinoic acid, and regulate gene expression in various biological processes. The RXR/RAR heterodimers bind to the retinoic acid response elements (RARE) composed of tandem 5'-AGGTCA-3' sites known as DR1-DR5. In the absence of ligand, the RXR-RAR heterodimers associate with a multiprotein complex containing transcription corepressors that induce histone deacetylation, chromatin condensation and transcriptional suppression. On ligand binding, the corepressors dissociate from the receptors and associate with the coactivators leading to transcriptional activation. Formation of a complex with histone deacetylases might lead to inhibition of RARE DNA element binding and to transcriptional repression. Transcriptional activation and RARE DNA element binding might be supported by the transcription factor KLF2. RARA plays an essential role in the regulation of retinoic acid-induced germ cell development during spermatogenesis. Has a role in the survival of early spermatocytes at the beginning prophase of meiosis. In Sertoli cells, may promote the survival and development of early meiotic prophase spermatocytes. In concert with RARG, required for skeletal growth, matrix homeostasis and growth plate function. Together with RXRA, positively regulates microRNA-10a expression, thereby inhibiting the GATA6/VCAM1 signaling response to pulsatile shear stress in vascular endothelial cells. In association with HDAC3, HDAC5 and HDAC7 corepressors, plays a role in the repression of microRNA-10a and thereby promotes the inflammatory response. This chain is Retinoic acid receptor alpha (RARA), found in Homo sapiens (Human).